Here is a 326-residue protein sequence, read N- to C-terminus: Probable fructokinase-4 (326 aa).

It belongs to the carbohydrate kinase PfkB family.

The enzyme catalyses D-fructose + ATP = D-fructose 6-phosphate + ADP + H(+). Its pathway is glycan biosynthesis; starch biosynthesis. May play an important role in maintaining the flux of carbon towards starch formation. The chain is Probable fructokinase-4 from Arabidopsis thaliana (Mouse-ear cress).